The following is a 391-amino-acid chain: 4-hydroxy-3-methylbut-2-en-1-yl diphosphate synthase (flavodoxin) (391 aa).

[4Fe-4S] cluster is bound by residues Cys282, Cys285, Cys317, and Glu324.

It belongs to the IspG family. [4Fe-4S] cluster is required as a cofactor.

The catalysed reaction is (2E)-4-hydroxy-3-methylbut-2-enyl diphosphate + oxidized [flavodoxin] + H2O + 2 H(+) = 2-C-methyl-D-erythritol 2,4-cyclic diphosphate + reduced [flavodoxin]. Its pathway is isoprenoid biosynthesis; isopentenyl diphosphate biosynthesis via DXP pathway; isopentenyl diphosphate from 1-deoxy-D-xylulose 5-phosphate: step 5/6. Its function is as follows. Converts 2C-methyl-D-erythritol 2,4-cyclodiphosphate (ME-2,4cPP) into 1-hydroxy-2-methyl-2-(E)-butenyl 4-diphosphate. This Acidothermus cellulolyticus (strain ATCC 43068 / DSM 8971 / 11B) protein is 4-hydroxy-3-methylbut-2-en-1-yl diphosphate synthase (flavodoxin).